Here is a 215-residue protein sequence, read N- to C-terminus: Large ribosomal subunit protein bL25 (215 aa).

The segment at 170-215 (DPDTSVASVTPPTTEEDLDTDDVDENAEPELVGAENDSADEESENK) is disordered. 2 stretches are compositionally biased toward acidic residues: residues 183 to 197 (TEED…ENAE) and 206 to 215 (DSADEESENK).

This sequence belongs to the bacterial ribosomal protein bL25 family. CTC subfamily. Part of the 50S ribosomal subunit; part of the 5S rRNA/L5/L18/L25 subcomplex. Contacts the 5S rRNA. Binds to the 5S rRNA independently of L5 and L18.

This is one of the proteins that binds to the 5S RNA in the ribosome where it forms part of the central protuberance. The polypeptide is Large ribosomal subunit protein bL25 (Oceanobacillus iheyensis (strain DSM 14371 / CIP 107618 / JCM 11309 / KCTC 3954 / HTE831)).